The following is a 129-amino-acid chain: Glycine cleavage system H protein (129 aa).

The Lipoyl-binding domain maps to 24 to 106; it reads LLKIGVSEFA…IGEGWLVILK (83 aa). Lysine 65 carries the N6-lipoyllysine modification.

It belongs to the GcvH family. As to quaternary structure, the glycine cleavage system is composed of four proteins: P, T, L and H. It depends on (R)-lipoate as a cofactor.

Functionally, the glycine cleavage system catalyzes the degradation of glycine. The H protein shuttles the methylamine group of glycine from the P protein to the T protein. The polypeptide is Glycine cleavage system H protein (Prochlorococcus marinus (strain MIT 9215)).